Reading from the N-terminus, the 269-residue chain is Formamidopyrimidine-DNA glycosylase (269 aa).

The active-site Schiff-base intermediate with DNA is P2. E3 functions as the Proton donor in the catalytic mechanism. K57 functions as the Proton donor; for beta-elimination activity in the catalytic mechanism. Positions 90, 109, and 150 each coordinate DNA. The FPG-type zinc finger occupies 235-269; it reads QVYGRKGEPCRVCGTPIVASKHAQRATFYCRQCQK. R259 serves as the catalytic Proton donor; for delta-elimination activity.

This sequence belongs to the FPG family. As to quaternary structure, monomer. Zn(2+) is required as a cofactor.

The enzyme catalyses Hydrolysis of DNA containing ring-opened 7-methylguanine residues, releasing 2,6-diamino-4-hydroxy-5-(N-methyl)formamidopyrimidine.. The catalysed reaction is 2'-deoxyribonucleotide-(2'-deoxyribose 5'-phosphate)-2'-deoxyribonucleotide-DNA = a 3'-end 2'-deoxyribonucleotide-(2,3-dehydro-2,3-deoxyribose 5'-phosphate)-DNA + a 5'-end 5'-phospho-2'-deoxyribonucleoside-DNA + H(+). In terms of biological role, involved in base excision repair of DNA damaged by oxidation or by mutagenic agents. Acts as a DNA glycosylase that recognizes and removes damaged bases. Has a preference for oxidized purines, such as 7,8-dihydro-8-oxoguanine (8-oxoG). Has AP (apurinic/apyrimidinic) lyase activity and introduces nicks in the DNA strand. Cleaves the DNA backbone by beta-delta elimination to generate a single-strand break at the site of the removed base with both 3'- and 5'-phosphates. This chain is Formamidopyrimidine-DNA glycosylase, found in Enterobacter sp. (strain 638).